Here is a 698-residue protein sequence, read N- to C-terminus: MANKREFPLDKTRNIGIMAHIDAGKTTTTERILYYTGKIHKIGETHEGDSQMDWMEEEKERGITITSAATTAQWKDYRINIIDTPGHVDFTIEVERSLRVLDGAVTVLDAQAGVEPQTENVWRQAETYGVPRIVFVNKMDKIGADFDKSVKSLHERLNANAQAVQMPIGSADTFEGVIDLINMVADVYDEDKLGSKWDTIPVPDEYKEEALKRRNELIEAVADVDDGIMDKYLGGEEISNDELKAAIRKATLNLEFFPVYAGSAFKNKGVQMMLDGVVDYLPSPLDVKPYVAHDPKTGDEVELMADDKKPFAALAFKIATDPFVGRLTFIRVYTGSLQSGSYVLNASKNSRERVGRLLQMHANSRTEISEVFSGDIAGAIGLKNTTTGDSLTDPAHPLILESLQVPDPVIQVSVEPKSKADRDKMDVALQKLTEEDPTFRAETNPETGQTLISGMGELHLDIMVERMKREFNVEATIGEPQVAYRETFTKEAKAQGKFVRQSGGKGQYGDVWIEFTPNEEGKGYEFEDAIVGGVVPREFIPSVDQGLQEAMKNGVLAGYPLIDVKAKLYDGSYHEVDSSEAAFKVAASLALRNAASKAGAVILEPIMKVQVTTPEEYLGDVMGSITARRGSMEGMEDRAGAKVINSFVPLSEMFGYATTLRSSTQGRGTFTMVFDHYSPTPKSIQADIIKKRGGEDAE.

Residues 10 to 285 form the tr-type G domain; sequence DKTRNIGIMA…GVVDYLPSPL (276 aa). Residues 19 to 26, 83 to 87, and 137 to 140 each bind GTP; these read AHIDAGKT, DTPGH, and NKMD.

It belongs to the TRAFAC class translation factor GTPase superfamily. Classic translation factor GTPase family. EF-G/EF-2 subfamily.

Its subcellular location is the cytoplasm. Functionally, catalyzes the GTP-dependent ribosomal translocation step during translation elongation. During this step, the ribosome changes from the pre-translocational (PRE) to the post-translocational (POST) state as the newly formed A-site-bound peptidyl-tRNA and P-site-bound deacylated tRNA move to the P and E sites, respectively. Catalyzes the coordinated movement of the two tRNA molecules, the mRNA and conformational changes in the ribosome. In Lactobacillus johnsonii (strain CNCM I-12250 / La1 / NCC 533), this protein is Elongation factor G.